We begin with the raw amino-acid sequence, 418 residues long: Thyroxine-binding globulin (418 aa).

Positions 1–20 are cleaved as a signal peptide; sequence MSMFFYLFLLVLGLQATIHC. Residues Asn24, Asn39, Asn102, Asn168, Asn227, and Asn256 are each glycosylated (N-linked (GlcNAc...) asparagine). Thyroxine-binding residues include Asn296 and Lys401.

This sequence belongs to the serpin family. As to expression, expressed by the liver and secreted in plasma.

It is found in the secreted. In terms of biological role, major thyroid hormone transport protein in serum. This is Thyroxine-binding globulin (Serpina7) from Rattus norvegicus (Rat).